The sequence spans 39 residues: Large ribosomal subunit protein bL12 (39 aa).

The protein belongs to the bacterial ribosomal protein bL12 family. In terms of assembly, homodimer. Part of the ribosomal stalk of the 50S ribosomal subunit. Forms a multimeric L10(L12)X complex, where L10 forms an elongated spine to which 2 to 4 L12 dimers bind in a sequential fashion. Binds GTP-bound translation factors.

Forms part of the ribosomal stalk which helps the ribosome interact with GTP-bound translation factors. Is thus essential for accurate translation. This is Large ribosomal subunit protein bL12 (rplL) from Arthrobacter glacialis.